A 688-amino-acid chain; its full sequence is Protein sel-1 homolog 2 (688 aa).

Residues 1 to 23 form the signal peptide; that stretch reads MKPLSLLIEILIILGVTIKTIKA. Over 24–662 the chain is Extracellular; that stretch reads EEHNKRQKER…RWNWLKLDNT (639 aa). Asn-34 carries N-linked (GlcNAc...) asparagine glycosylation. Sel1-like repeat units follow at residues 107–142, 143–178, 179–214, 215–250, 297–333, 334–370, 371–406, 407–442, 443–478, 551–586, and 588–623; these read GDQLFKMGIKVLQQSKSQKQKEEAYLLFAKAADMGN, LKAMEKMADALLFGNFGVQNITAAIQLYESLAKEGS, CKAQNALGFLSSYGIGMEYDQAKALIYYTFGSAGGN, MMSQMILGYRYLSGINVLQNCEVALSYYKKVADYIA, VQIQVSLGQLHLIGRKGLDQDYYKALHYFLKAAKAGS, ANAMAFIGKMYLEGNAAVPQNNATAFKYFSMAASKGN, AIGLHGLGLLYFHGKGVPLNYAEALKYFQKAAEKGW, PDAQFQLGFMYYSGSGIWKDYKLAFKYFYLASQSGQ, PLAIYYLAKMYATGTGVVRSCRTAVELYKGVCELGH, AFARVKIGDYHYYGYGTKKDYQTAATHYSIAANKYH, and AQAMFNLAYMYEHGLGITKDIHLARRLYDMAAQTSP. The chain crosses the membrane as a helical span at residues 663 to 683; the sequence is IGPHWDLFVIGLIVPGLILLL. Residues 684-688 lie on the Cytoplasmic side of the membrane; that stretch reads RNHHG.

The protein belongs to the sel-1 family.

It is found in the membrane. The protein localises to the cell projection. It localises to the cilium. Its subcellular location is the nucleus speckle. The sequence is that of Protein sel-1 homolog 2 (SEL1L2) from Homo sapiens (Human).